The primary structure comprises 182 residues: Transcription antitermination protein NusB (182 aa).

Positions 159 to 182 (TPVENSEAEAAGYPVEESIEEDSQ) are disordered.

This sequence belongs to the NusB family.

Its function is as follows. Involved in transcription antitermination. Required for transcription of ribosomal RNA (rRNA) genes. Binds specifically to the boxA antiterminator sequence of the ribosomal RNA (rrn) operons. This chain is Transcription antitermination protein NusB, found in Corynebacterium diphtheriae (strain ATCC 700971 / NCTC 13129 / Biotype gravis).